Reading from the N-terminus, the 645-residue chain is 1,4-alpha-glucan branching enzyme GlgB (645 aa).

Aspartate 309 (nucleophile) is an active-site residue. Glutamate 352 serves as the catalytic Proton donor. The tract at residues 619–645 (VKTRKGSKKQDGSKTKVRSNVTSRGKR) is disordered. Polar residues predominate over residues 636–645 (RSNVTSRGKR).

Belongs to the glycosyl hydrolase 13 family. GlgB subfamily. In terms of assembly, monomer.

The enzyme catalyses Transfers a segment of a (1-&gt;4)-alpha-D-glucan chain to a primary hydroxy group in a similar glucan chain.. It participates in glycan biosynthesis; glycogen biosynthesis. Its function is as follows. Catalyzes the formation of the alpha-1,6-glucosidic linkages in glycogen by scission of a 1,4-alpha-linked oligosaccharide from growing alpha-1,4-glucan chains and the subsequent attachment of the oligosaccharide to the alpha-1,6 position. The protein is 1,4-alpha-glucan branching enzyme GlgB of Bacillus cereus (strain AH820).